Here is a 209-residue protein sequence, read N- to C-terminus: Ribonuclease HII (209 aa).

In terms of domain architecture, RNase H type-2 spans 19–209 (CTIVGVDEVG…ASGITKLYNK (191 aa)). Asp-25, Glu-26, and Asp-118 together coordinate a divalent metal cation.

Belongs to the RNase HII family. Mn(2+) is required as a cofactor. The cofactor is Mg(2+).

The protein resides in the cytoplasm. It catalyses the reaction Endonucleolytic cleavage to 5'-phosphomonoester.. Endonuclease that specifically degrades the RNA of RNA-DNA hybrids. The polypeptide is Ribonuclease HII (Ehrlichia chaffeensis (strain ATCC CRL-10679 / Arkansas)).